We begin with the raw amino-acid sequence, 539 residues long: SAGA complex/transcription factor TFIID complex subunit TAF12 (539 aa).

Disordered stretches follow at residues methionine 1–glutamine 28 and glutamine 86–serine 129. Position 2 is an N-acetylserine (serine 2). 2 stretches are compositionally biased toward low complexity: residues asparagine 7 to alanine 27 and glutamine 87 to serine 105. Serine 129 carries the post-translational modification Phosphoserine. Coiled coils occupy residues glutamine 153–aspartate 202 and leucine 239–isoleucine 285. The segment covering glutamine 274 to arginine 283 has biased composition (low complexity). The disordered stretch occupies residues glutamine 274–alanine 332. Composition is skewed to polar residues over residues lysine 284–proline 294 and asparagine 310–alanine 332. A Phosphoserine modification is found at serine 286. In terms of domain architecture, Histone-fold spans arginine 413–isoleucine 490.

The protein belongs to the TAF12 family. Component of the 1.8 MDa SAGA (Spt-Ada-Gcn5 acetyltransferase) complex, which is composed of 19 subunits TRA1, SPT7, TAF5, NGG1/ADA3, SGF73, SPT20/ADA5, SPT8, TAF12, TAF6, HFI1/ADA1, UBP8, GCN5, ADA2, SPT3, SGF29, TAF10, TAF9, SGF11 and SUS1. The SAGA complex is composed of 4 modules, namely the HAT (histone acetyltransferase) module (GCN5, ADA2, NGG1/ADA3 and SGF29), the DUB (deubiquitinating) module (UBP8, SGF11, SGF73 and SUS1), the core or TAF (TBP-associated factor) module (TAF5, TAF6, TAF9, TAF10 and TAF12), and the Tra1 or SPT (Suppressor of Ty) module (TRA1, HFI1/ADA1, SPT3, SPT7, SPT8 and SPT20/ADA5). The Tra1/SPT module binds activators, the core module recruits TBP (TATA-binding protein), the HAT module contains the histone H3 acetyltransferase GCN5, and the DUB module comprises the histone H2B deubiquitinase UBP8. Also identified in an altered form of SAGA, named SALSA (SAGA altered, Spt8 absent) or SLIK (SAGA-like) complex, which contains a C-terminal truncated form of SPT7 and is missing SPT8. However, it has been shown that the SAGA and SAGA-like SALSA/SLIK transcriptional coactivators are structurally and biochemically equivalent. Component of the 1.2 MDa TFIID complex, which is composed of TATA-binding protein (TBP) and the 14 TBP-associated factors (TAFs). It comprises 1 copy of each TAF1, TAF2, TAF3, TAF7, TAF8, TAF11, TAF13, 2 copies of each TAF4, TAF5, TAF6, TAF9, TAF10, TAF12, and 3 copies of TAF14. In TFIID, TAF12 heterodimerizes with TAF4, forming ultimately an octamer consisting of a TAF6-TAF9 heterotetramer core flanked by TAF4-TAF12 dimers on either side, similar to the histone H2A-H2B-H3-H4 octamer.

The protein resides in the nucleus. Functions as a component of both the DNA-binding general transcription initiation factor complex TFIID and the transcription coactivator SAGA complex. Binding of TFIID to a promoter (with or without TATA element) is the initial step in pre-initiation complex (PIC) formation. TFIID plays a key role in the regulation of gene expression by RNA polymerase II through different activities such as transcription activator interaction, core promoter recognition and selectivity, TFIIA and TFIIB interaction, chromatin modification (histone acetylation by TAF1), facilitation of DNA opening and initiation of transcription. SAGA acts as a general cofactor required for essentially all RNA polymerase II transcription. At the promoters, SAGA is required for transcription pre-initiation complex (PIC) recruitment. It influences RNA polymerase II transcriptional activity through different activities such as TBP interaction (via core/TAF module) and promoter selectivity, interaction with transcription activators (via Tra1/SPT module), and chromatin modification through histone acetylation (via HAT module) and deubiquitination (via DUB module). SAGA preferentially acetylates histones H3 (to form H3K9ac, H3K14ac, H3K18ac and H3K23ac) and H2B and deubiquitinates histone H2B. SAGA interacts with DNA via upstream activating sequences (UASs). Also identified in a modified version of SAGA named SALSA or SLIK. The cleavage of SPT7 and the absence of the SPT8 subunit in SLIK neither drive any major conformational differences in its structure compared with SAGA, nor significantly affect HAT, DUB, or DNA-binding activities. The sequence is that of SAGA complex/transcription factor TFIID complex subunit TAF12 (TAF12) from Saccharomyces cerevisiae (strain ATCC 204508 / S288c) (Baker's yeast).